The primary structure comprises 196 residues: Cilia- and flagella-associated protein 107 (196 aa).

Mn regions lie at residues 47-62 (TPQC…MPDH) and 97-109 (ISTY…RHNY).

In terms of assembly, microtubule inner protein component of sperm flagellar doublet microtubules.

The protein localises to the cytoplasm. Its subcellular location is the cytoskeleton. It is found in the cilium axoneme. It localises to the flagellum axoneme. Microtubule inner protein (MIP) part of the dynein-decorated doublet microtubules (DMTs) in cilia axoneme, which is required for motile cilia beating. The sequence is that of Cilia- and flagella-associated protein 107 from Mus musculus (Mouse).